Consider the following 936-residue polypeptide: Phosphoenolpyruvate carboxylase (936 aa).

Residues His-155 and Lys-595 contribute to the active site.

It belongs to the PEPCase type 1 family. As to quaternary structure, homotetramer. The cofactor is Mg(2+). Mn(2+) is required as a cofactor.

It catalyses the reaction oxaloacetate + phosphate = phosphoenolpyruvate + hydrogencarbonate. With respect to regulation, exhibits positive allosteric property with acetyl-CoA and fructose 1,6-bisphosphate, and a negative one with L-aspartate and L-malate. Functionally, forms oxaloacetate, a four-carbon dicarboxylic acid source for the tricarboxylic acid cycle. The protein is Phosphoenolpyruvate carboxylase (ppc) of Rhodothermus marinus (Rhodothermus obamensis).